A 302-amino-acid polypeptide reads, in one-letter code: uncharacterized protein (302 aa).

Belongs to the HAD-like hydrolase superfamily.

It localises to the cytoplasm. Its subcellular location is the nucleus. This is an uncharacterized protein from Schizosaccharomyces pombe (strain 972 / ATCC 24843) (Fission yeast).